Consider the following 901-residue polypeptide: Translation initiation factor IF-2 (901 aa).

The disordered stretch occupies residues 48-313; it reads HLNREHGGSS…SSLQQGFTKP (266 aa). Residues 68–82 are compositionally biased toward polar residues; sequence STLSVPGTGGKSKSV. Residues 106–226 show a composition bias toward basic and acidic residues; the sequence is ALAKREAEEQ…RMAEANEGKW (121 aa). Residues 263–277 show a composition bias toward basic residues; sequence ARGRGGKAAKQKKGS. A compositionally biased stretch (basic and acidic residues) spans 278–291; it reads KLSESKADREEARA. One can recognise a tr-type G domain in the interval 400–569; sequence PRAPVVTIMG…LLQAEVLELK (170 aa). The interval 409–416 is G1; that stretch reads GHVDHGKT. 409–416 contributes to the GTP binding site; that stretch reads GHVDHGKT. A G2 region spans residues 434-438; sequence GITQH. The interval 455 to 458 is G3; sequence DTPG. Residues 455-459 and 509-512 contribute to the GTP site; these read DTPGH and NKID. Residues 509–512 form a G4 region; that stretch reads NKID. Positions 545–547 are G5; it reads SAK.

Belongs to the TRAFAC class translation factor GTPase superfamily. Classic translation factor GTPase family. IF-2 subfamily.

The protein resides in the cytoplasm. In terms of biological role, one of the essential components for the initiation of protein synthesis. Protects formylmethionyl-tRNA from spontaneous hydrolysis and promotes its binding to the 30S ribosomal subunits. Also involved in the hydrolysis of GTP during the formation of the 70S ribosomal complex. The sequence is that of Translation initiation factor IF-2 from Edwardsiella ictaluri (strain 93-146).